Here is a 573-residue protein sequence, read N- to C-terminus: E3 ubiquitin-protein ligase RNF168 (573 aa).

The segment at 16–55 (CQICVEILFEPVTLPCNHTLCKPCFESTVEKASLCCPFCR) adopts an RING-type zinc-finger fold. Ser-70 carries the post-translational modification Phosphoserine. An LR motif 1 motif is present at residues 110-128 (LSKPGELRREYEEEISKVE). The UMI motif motif lies at 143 to 151 (EEYIQKLLA). Disordered stretches follow at residues 153–174 (EEEE…QLKS) and 196–277 (ASPL…EDMP). A compositionally biased stretch (basic and acidic residues) spans 157 to 174 (EKRQAEKRHREMEEQLKS). Residues 168-191 (MEEQLKSDEELARRLSLDINNFCE) carry the MIU motif 1 motif. Phosphoserine is present on Ser-197. Residue Lys-210 forms a Glycyl lysine isopeptide (Lys-Gly) (interchain with G-Cter in SUMO2) linkage. The span at 231–243 (PKSQLGSASQSEV) shows a compositional bias: polar residues. Basic and acidic residues predominate over residues 245-261 (QEDRKSSMSKKIDDNSD). Thr-363 carries the phosphothreonine modification. Ser-416 is modified (phosphoserine). An MIU motif 2 motif is present at residues 440-463 (RHKQEKQDRLLALQLQEEVDQEQM). Positions 456–528 (EEVDQEQMRP…NHQQPSFKIQ (73 aa)) are disordered. The segment covering 461–470 (EQMRPDRQKG) has biased composition (basic and acidic residues). An LR motif 2 motif is present at residues 467–478 (RQKGSPDGYQLR). A Phosphoserine modification is found at Ser-471. Residues 494-519 (NSRDRNSKRQTELEQPKPRTDSKNEN) are compositionally biased toward basic and acidic residues. Lys-530 participates in a covalent cross-link: Glycyl lysine isopeptide (Lys-Gly) (interchain with G-Cter in SUMO2). Residues 540–573 (NSTNDNCNVSKTAHSLQPSKSQKSIFQMFQRVTK) are disordered.

The protein belongs to the RNF168 family. As to quaternary structure, monomer. Interacts with UBE2N/UBC13. Post-translationally, sumoylated with SUMO1 by PIAS4 in response to double-strand breaks (DSBs). Ubiquitinated.

Its subcellular location is the nucleus. It catalyses the reaction S-ubiquitinyl-[E2 ubiquitin-conjugating enzyme]-L-cysteine + [acceptor protein]-L-lysine = [E2 ubiquitin-conjugating enzyme]-L-cysteine + N(6)-ubiquitinyl-[acceptor protein]-L-lysine.. It functions in the pathway protein modification; protein ubiquitination. E3 ubiquitin-protein ligase required for accumulation of repair proteins to sites of DNA damage. Acts with UBE2N/UBC13 to amplify the RNF8-dependent histone ubiquitination. Recruited to sites of DNA damage at double-strand breaks (DSBs) by binding to ubiquitinated histone H2A and H2AX and amplifies the RNF8-dependent H2A ubiquitination, promoting the formation of 'Lys-63'-linked ubiquitin conjugates. This leads to concentrate ubiquitinated histones H2A and H2AX at DNA lesions to the threshold required for recruitment of TP53BP1 and BRCA1. Also recruited at DNA interstrand cross-links (ICLs) sites and promotes accumulation of 'Lys-63'-linked ubiquitination of histones H2A and H2AX, leading to recruitment of FAAP20 and Fanconi anemia (FA) complex, followed by interstrand cross-link repair. H2A ubiquitination also mediates the ATM-dependent transcriptional silencing at regions flanking DSBs in cis, a mechanism to avoid collision between transcription and repair intermediates. Also involved in class switch recombination in immune system, via its role in regulation of DSBs repair. Following DNA damage, promotes the ubiquitination and degradation of JMJD2A/KDM4A in collaboration with RNF8, leading to unmask H4K20me2 mark and promote the recruitment of TP53BP1 at DNA damage sites. Not able to initiate 'Lys-63'-linked ubiquitination in vitro; possibly due to partial occlusion of the UBE2N/UBC13-binding region. Catalyzes monoubiquitination of 'Lys-13' and 'Lys-15' of nucleosomal histone H2A (H2AK13Ub and H2AK15Ub, respectively). The chain is E3 ubiquitin-protein ligase RNF168 from Bos taurus (Bovine).